Here is a 230-residue protein sequence, read N- to C-terminus: MPKLVLLRHGQSIWNLENRFTGWYDVDLSDQGINEAREAGVALREAGIAPQVAYTSVLKRAIRTLWLSLAELDRMWIPEIKDWRLNERHYGALTGLNKAETAEQYGDEQVHIWRRSYDTPPPALDAEDERHPRHDPRYAGLDPQQLPGTESLKLTLERVLPCWEGEIAPALRQHDCVLIAAHGNSLRALVKHLDGLADDAIMKVEIPTGRPLVYELAEDLSVQRSYYVQD.

Residues 8-15 (RHGQSIWN), 21-22 (TG), Arg60, 87-90 (ERHY), Lys98, and 114-115 (RR) contribute to the substrate site. Residue His9 is the Tele-phosphohistidine intermediate of the active site. The Proton donor/acceptor role is filled by Glu87. The interval 117-143 (YDTPPPALDAEDERHPRHDPRYAGLDP) is disordered. A compositionally biased stretch (basic and acidic residues) spans 128 to 137 (DERHPRHDPR). Residue 183–184 (GN) participates in substrate binding.

It belongs to the phosphoglycerate mutase family. BPG-dependent PGAM subfamily. Homodimer.

It carries out the reaction (2R)-2-phosphoglycerate = (2R)-3-phosphoglycerate. It participates in carbohydrate degradation; glycolysis; pyruvate from D-glyceraldehyde 3-phosphate: step 3/5. In terms of biological role, catalyzes the interconversion of 2-phosphoglycerate and 3-phosphoglycerate. This is 2,3-bisphosphoglycerate-dependent phosphoglycerate mutase from Halorhodospira halophila (strain DSM 244 / SL1) (Ectothiorhodospira halophila (strain DSM 244 / SL1)).